Reading from the N-terminus, the 188-residue chain is Elongation factor P (188 aa).

This sequence belongs to the elongation factor P family.

It localises to the cytoplasm. Its pathway is protein biosynthesis; polypeptide chain elongation. Involved in peptide bond synthesis. Stimulates efficient translation and peptide-bond synthesis on native or reconstituted 70S ribosomes in vitro. Probably functions indirectly by altering the affinity of the ribosome for aminoacyl-tRNA, thus increasing their reactivity as acceptors for peptidyl transferase. The protein is Elongation factor P of Methylorubrum populi (strain ATCC BAA-705 / NCIMB 13946 / BJ001) (Methylobacterium populi).